The chain runs to 314 residues: Signal peptidase I (314 aa).

A helical transmembrane segment spans residues 5–25 (LTIFLLISTLVTGIFWSFYCI). Topologically, residues 26 to 63 (KSFKNYLINKKIINNNNFHQEKIEKSKNKTYFLKSLAS) are cytoplasmic. The chain crosses the membrane as a helical span at residues 64–84 (FFPIFLAIFIIRSFIYEPFQI). At 85 to 314 (PSGSMMPTLL…IRINRIGSIH (230 aa)) the chain is on the extracellular side. Catalysis depends on residues Ser-88 and Lys-143.

This sequence belongs to the peptidase S26 family.

The protein resides in the cell membrane. It carries out the reaction Cleavage of hydrophobic, N-terminal signal or leader sequences from secreted and periplasmic proteins.. This is Signal peptidase I (lepB) from Buchnera aphidicola subsp. Acyrthosiphon pisum (strain APS) (Acyrthosiphon pisum symbiotic bacterium).